We begin with the raw amino-acid sequence, 456 residues long: Cysteine--tRNA ligase (456 aa).

Cys-28 is a binding site for Zn(2+). Positions Met-30–His-40 match the 'HIGH' region motif. The Zn(2+) site is built by Cys-209, His-234, and Glu-238. The short motif at Lys-266–Ser-270 is the 'KMSKS' region element. Lys-269 contributes to the ATP binding site.

Belongs to the class-I aminoacyl-tRNA synthetase family. Monomer. Zn(2+) is required as a cofactor.

The protein localises to the cytoplasm. The catalysed reaction is tRNA(Cys) + L-cysteine + ATP = L-cysteinyl-tRNA(Cys) + AMP + diphosphate. The sequence is that of Cysteine--tRNA ligase from Dechloromonas aromatica (strain RCB).